A 184-amino-acid polypeptide reads, in one-letter code: TRAF-interacting protein with FHA domain-containing protein A (184 aa).

T9 carries the post-translational modification Phosphothreonine; by ALPK1. The region spanning 47 to 103 (VKFGRNSNICHYTFQDKQVSRVQFSLQLFKKFNSSVLSFEIKNMSKKTNLIVDSREL) is the FHA domain. Positions 165–184 (TYSLCSSQSSSPTEMDENES) are disordered. The segment covering 167-177 (SLCSSQSSSPT) has biased composition (polar residues).

The protein belongs to the TIFA family. As to quaternary structure, homooligomer; homooligomerizes following phosphorylation at Thr-9. Interacts with IRAK1, TRAF2 and TRAF6. Interacts with TIFAB; binding to TIFAB inhibits TRAF6 activation, possibly by inducing a conformational change in TIFA. Interacts with ZCCHC11; binding to ZCCHC11 suppresses the TRAF6-dependent activation of NF-kappa-B. In terms of processing, phosphorylated at Thr-9 following detection of ADP-D-glycero-beta-D-manno-heptose (ADP-Heptose) by ALPK1. Phosphorylation at Thr-9 by ALPK1 leads to the formation of an intermolecular binding between the FHA domain and phosphorylated Thr-9, promoting TIFA oligomerization and TIFA-mediated NF-kappa-B activation.

It localises to the cytoplasm. Its function is as follows. Adapter molecule that plays a key role in the activation of pro-inflammatory NF-kappa-B signaling following detection of bacterial pathogen-associated molecular pattern metabolites (PAMPs). Promotes activation of an innate immune response by inducing the oligomerization and polyubiquitination of TRAF6, which leads to the activation of TAK1 and IKK through a proteasome-independent mechanism. TIFA-dependent innate immune response is triggered by ADP-D-glycero-beta-D-manno-heptose (ADP-Heptose), a potent PAMP present in all Gram-negative and some Gram-positive bacteria: ADP-Heptose is recognized by ALPK1, which phosphorylates TIFA at Thr-9, leading to TIFA homooligomerization and subsequent activation of pro-inflammatory NF-kappa-B signaling. This chain is TRAF-interacting protein with FHA domain-containing protein A, found in Homo sapiens (Human).